The following is a 110-amino-acid chain: Keratin, type II cytoskeletal 8 (110 aa).

Positions 1 to 12 (MSTSGPRAFSSR) are head. The IF rod domain maps to 1-110 (MSTSGPRAFS…LDIEIATYRK (110 aa)). 4 positions are modified to phosphoserine: Ser-2, Ser-4, Ser-10, and Ser-11. Arg-12 bears the Omega-N-methylarginine mark. The coil 1A stretch occupies residues 13-25 (FASFIDKVRWSLL). Positions 26-39 (QQQKSNMDNMFESY) are linker 1. Lys-29 is covalently cross-linked (Glycyl lysine isopeptide (Lys-Gly) (interchain with G-Cter in SUMO2)). Residues 40–79 (INNLRDVDEAYMNKVELESRLEGLTDEINFLRQIHEEEIR) form a coil 1B region. N6-acetyllysine is present on Lys-53. Phosphoserine occurs at positions 80 and 85. The linker 12 stretch occupies residues 80 to 86 (SLDMDSI). The segment at 87-110 (IAEVRHGDDLRRLALDIEIATYRK) is coil 2. The segment at 88-99 (AEVRHGDDLRRL) is necessary for interaction with PNN. Residue Lys-110 forms a Glycyl lysine isopeptide (Lys-Gly) (interchain with G-Cter in SUMO2) linkage.

It belongs to the intermediate filament family. As to quaternary structure, heterotetramer of two type I and two type II keratins. Forms a heterodimer with KRT18. Associates with KRT20. Interacts with PNN. When associated with KRT19, interacts with DMD. Interacts with TCHP. Interacts with APEX1. Interacts with GPER1. Interacts with EPPK1. Interacts with PKP1 and PKP2. Post-translationally, O-glycosylated. O-GlcNAcylation at multiple sites increases solubility, and decreases stability by inducing proteasomal degradation. O-glycosylated (O-GlcNAcylated), in a cell cycle-dependent manner.

It localises to the cytoplasm. The protein resides in the nucleus. The protein localises to the nucleoplasm. Its subcellular location is the nucleus matrix. In terms of biological role, together with KRT19, helps to link the contractile apparatus to dystrophin at the costameres of striated muscle. The sequence is that of Keratin, type II cytoskeletal 8 from Mesocricetus auratus (Golden hamster).